A 469-amino-acid chain; its full sequence is Argininosuccinate lyase (469 aa).

It belongs to the lyase 1 family. Argininosuccinate lyase subfamily.

The protein localises to the cytoplasm. It carries out the reaction 2-(N(omega)-L-arginino)succinate = fumarate + L-arginine. The protein operates within amino-acid biosynthesis; L-arginine biosynthesis; L-arginine from L-ornithine and carbamoyl phosphate: step 3/3. This is Argininosuccinate lyase from Burkholderia vietnamiensis (strain G4 / LMG 22486) (Burkholderia cepacia (strain R1808)).